The following is a 29-amino-acid chain: Glucagon (29 aa).

This sequence belongs to the glucagon family.

The protein resides in the secreted. Glucagon plays a key role in glucose metabolism and homeostasis. Regulates blood glucose by increasing gluconeogenesis and decreasing glycolysis. In Lampetra fluviatilis (European river lamprey), this protein is Glucagon (gcg).